Here is a 518-residue protein sequence, read N- to C-terminus: Membrane-bound lytic murein transglycosylase F (518 aa).

The N-terminal stretch at 1–21 (MKKLKINYLFIGILALLLAVA) is a signal peptide. Positions 22–269 (LWPSIPWFGK…RIEEKYLGHG (248 aa)) are non-LT domain. An LT domain region spans residues 270–518 (DDFDYVDTRT…SRKGSEEKQN (249 aa)). E314 is an active-site residue.

In the N-terminal section; belongs to the bacterial solute-binding protein 3 family. This sequence in the C-terminal section; belongs to the transglycosylase Slt family.

The protein localises to the cell outer membrane. The enzyme catalyses Exolytic cleavage of the (1-&gt;4)-beta-glycosidic linkage between N-acetylmuramic acid (MurNAc) and N-acetylglucosamine (GlcNAc) residues in peptidoglycan, from either the reducing or the non-reducing ends of the peptidoglycan chains, with concomitant formation of a 1,6-anhydrobond in the MurNAc residue.. Its function is as follows. Murein-degrading enzyme that degrades murein glycan strands and insoluble, high-molecular weight murein sacculi, with the concomitant formation of a 1,6-anhydromuramoyl product. Lytic transglycosylases (LTs) play an integral role in the metabolism of the peptidoglycan (PG) sacculus. Their lytic action creates space within the PG sacculus to allow for its expansion as well as for the insertion of various structures such as secretion systems and flagella. This chain is Membrane-bound lytic murein transglycosylase F, found in Shigella boydii serotype 18 (strain CDC 3083-94 / BS512).